The chain runs to 179 residues: ATP synthase subunit b (179 aa).

The chain crosses the membrane as a helical span at residues 26-46 (FLEANLFNLAILLGIIIYYAP).

This sequence belongs to the ATPase B chain family. As to quaternary structure, F-type ATPases have 2 components, F(1) - the catalytic core - and F(0) - the membrane proton channel. F(1) has five subunits: alpha(3), beta(3), gamma(1), delta(1), epsilon(1). F(0) has four main subunits: a(1), b(1), b'(1) and c(10-14). The alpha and beta chains form an alternating ring which encloses part of the gamma chain. F(1) is attached to F(0) by a central stalk formed by the gamma and epsilon chains, while a peripheral stalk is formed by the delta, b and b' chains.

It is found in the cellular thylakoid membrane. F(1)F(0) ATP synthase produces ATP from ADP in the presence of a proton or sodium gradient. F-type ATPases consist of two structural domains, F(1) containing the extramembraneous catalytic core and F(0) containing the membrane proton channel, linked together by a central stalk and a peripheral stalk. During catalysis, ATP synthesis in the catalytic domain of F(1) is coupled via a rotary mechanism of the central stalk subunits to proton translocation. Functionally, component of the F(0) channel, it forms part of the peripheral stalk, linking F(1) to F(0). In Synechocystis sp. (strain ATCC 27184 / PCC 6803 / Kazusa), this protein is ATP synthase subunit b.